The chain runs to 477 residues: Glycogen synthase (477 aa).

K15 is a binding site for ADP-alpha-D-glucose.

Belongs to the glycosyltransferase 1 family. Bacterial/plant glycogen synthase subfamily.

The catalysed reaction is [(1-&gt;4)-alpha-D-glucosyl](n) + ADP-alpha-D-glucose = [(1-&gt;4)-alpha-D-glucosyl](n+1) + ADP + H(+). It participates in glycan biosynthesis; glycogen biosynthesis. Functionally, synthesizes alpha-1,4-glucan chains using ADP-glucose. The polypeptide is Glycogen synthase (Streptococcus pneumoniae (strain Hungary19A-6)).